Reading from the N-terminus, the 782-residue chain is ATP-dependent 6-phosphofructokinase, muscle type (782 aa).

N-acetylthreonine is present on T2. An N-terminal catalytic PFK domain 1 region spans residues 2 to 390 (THEEHHAAKT…NWEVYKLLAH (389 aa)). ATP-binding positions include G25, 88-89 (RC), and 118-121 (GDGS). D119 contributes to the Mg(2+) binding site. S133 is subject to Phosphoserine. Residues 164 to 166 (SID), R201, 208 to 210 (MGR), E264, R292, and 298 to 301 (HVQR) each bind substrate. Catalysis depends on D166, which acts as the Proton acceptor. S377 is modified (phosphoserine). The interval 391-403 (IRPPVSKTSATMH) is interdomain linker. Residues 404-782 (TVAVMNVGAP…SRKRSGETSI (379 aa)) are C-terminal regulatory PFK domain 2. Residues R473 and 530-534 (TVSNN) each bind beta-D-fructose 2,6-bisphosphate. S532 carries an O-linked (GlcNAc) serine glycan. K559 is subject to N6-(2-hydroxyisobutyryl)lysine. Residues R568, 575–577 (MGG), E631, R657, and 663–666 (HMQQ) contribute to the beta-D-fructose 2,6-bisphosphate site. Residue S669 is modified to Phosphoserine. Residue R737 participates in beta-D-fructose 2,6-bisphosphate binding. Phosphoserine is present on S777.

It belongs to the phosphofructokinase type A (PFKA) family. ATP-dependent PFK group I subfamily. Eukaryotic two domain clade 'E' sub-subfamily. Homo- and heterotetramers. Phosphofructokinase (PFK) enzyme functions as a tetramer composed of different combinations of 3 types of subunits, called PFKM (M), PFKL (L) and PFKP (P). The composition of the PFK tetramer differs according to the tissue type it is present in. The kinetic and regulatory properties of the tetrameric enzyme are dependent on the subunit composition, hence can vary across tissues. Interacts (via C-terminus) with HK1 (via N-terminal spermatogenic cell-specific region). Mg(2+) is required as a cofactor. In terms of processing, glcNAcylation decreases enzyme activity.

The protein resides in the cytoplasm. It carries out the reaction beta-D-fructose 6-phosphate + ATP = beta-D-fructose 1,6-bisphosphate + ADP + H(+). Its pathway is carbohydrate degradation; glycolysis; D-glyceraldehyde 3-phosphate and glycerone phosphate from D-glucose: step 3/4. Its activity is regulated as follows. Allosterically activated by ADP, AMP, or fructose 2,6-bisphosphate, and allosterically inhibited by ATP or citrate. Functionally, catalyzes the phosphorylation of D-fructose 6-phosphate to fructose 1,6-bisphosphate by ATP, the first committing step of glycolysis. This chain is ATP-dependent 6-phosphofructokinase, muscle type (PFKM), found in Canis lupus familiaris (Dog).